The sequence spans 515 residues: Maturase K (515 aa).

This sequence belongs to the intron maturase 2 family. MatK subfamily.

Its subcellular location is the plastid. It is found in the chloroplast. Usually encoded in the trnK tRNA gene intron. Probably assists in splicing its own and other chloroplast group II introns. This Trillium pusillum (Dwarf wakerobin) protein is Maturase K.